The sequence spans 273 residues: Large ribosomal subunit protein uL2 (273 aa).

Disordered regions lie at residues 28–53 (KPFA…TTRH) and 221–273 (RGTA…RRSK). Low complexity predominate over residues 39–48 (KSGGRNNNGR).

This sequence belongs to the universal ribosomal protein uL2 family. As to quaternary structure, part of the 50S ribosomal subunit. Forms a bridge to the 30S subunit in the 70S ribosome.

One of the primary rRNA binding proteins. Required for association of the 30S and 50S subunits to form the 70S ribosome, for tRNA binding and peptide bond formation. It has been suggested to have peptidyltransferase activity; this is somewhat controversial. Makes several contacts with the 16S rRNA in the 70S ribosome. The protein is Large ribosomal subunit protein uL2 of Salmonella agona (strain SL483).